Here is a 590-residue protein sequence, read N- to C-terminus: Glypican-3 (590 aa).

The first 25 residues, 1–25, serve as a signal peptide directing secretion; it reads MMPGLKLYGALILCVLVLPFSRPSS. Cystine bridges form between Cys30–Cys67, Cys60–Cys255, Cys68–Cys258, Cys190–Cys342, Cys245–Cys278, Cys267–Cys418, and Cys271–Cys406. 2 N-linked (GlcNAc...) asparagine glycosylation sites follow: Asn119 and Asn234. The N-linked (GlcNAc...) asparagine glycan is linked to Asn414. Disordered regions lie at residues 429-450 and 476-520; these read PGPGLKRVHPHGSESKQKTPEP and WRAR…SGLG. The span at 495 to 513 shows a compositional bias: acidic residues; it reads TDEDEEGLESGDCDDEDEC. Ser504 and Ser517 each carry an O-linked (Xyl...) (glycosaminoglycan) serine glycan.

This sequence belongs to the glypican family. In terms of assembly, heterodimer; disulfide-linked. Cleavage by a furin-like convertase results in production of alpha and beta chains which form a disulfide-linked heterodimer. O-glycosylated; contains heparan sulfate and/or chondroitin sulfate. Post-translationally, cleaved intracellularly by a furin-like convertase to generate 2 subunits, alpha and beta, which remain associated through disulfide bonds and are associated with the cell surface via the GPI-anchor. This processing is essential for its role in inhibition of hedgehog signaling. A second proteolytic event may result in cleavage of the protein on the cell surface, separating it from the GPI-anchor and leading to its shedding from the cell surface. Maternally expressed and is almost ubiquitous during blastula and gastrula stages but becomes restricted to the prospective hindbrain by 24 hours post-fertilization.

It localises to the cell membrane. Functionally, cell surface proteoglycan. Negatively regulates the hedgehog signaling pathway. Positively regulates the canonical and non-canonical Wnt signaling pathways. Binds to CD81 which decreases the availability of free CD81 for binding to the transcriptional repressor HHEX, resulting in nuclear translocation of HHEX and transcriptional repression. Inhibits the dipeptidyl peptidase activity of DPP4. Plays a role in limb patterning and skeletal development. Modulates the effects of growth factors on renal branching morphogenesis. Required for coronary vascular development. Plays a role in regulating cell movements during gastrulation. This Danio rerio (Zebrafish) protein is Glypican-3.